A 311-amino-acid polypeptide reads, in one-letter code: HPr kinase/phosphorylase (311 aa).

Catalysis depends on residues H138 and K159. 153-160 serves as a coordination point for ATP; sequence GDSGIGKS. S160 serves as a coordination point for Mg(2+). The active-site Proton acceptor; for phosphorylation activity. Proton donor; for dephosphorylation activity is the D177. Residues 201–210 form an important for the catalytic mechanism of both phosphorylation and dephosphorylation region; sequence IEIRGVGIID. Mg(2+) is bound at residue E202. Residue R243 is part of the active site. Residues 264 to 269 form an important for the catalytic mechanism of dephosphorylation region; that stretch reads PVKTGR.

The protein belongs to the HPrK/P family. As to quaternary structure, homohexamer. Mg(2+) serves as cofactor.

It carries out the reaction [HPr protein]-L-serine + ATP = [HPr protein]-O-phospho-L-serine + ADP + H(+). The enzyme catalyses [HPr protein]-O-phospho-L-serine + phosphate + H(+) = [HPr protein]-L-serine + diphosphate. Functionally, catalyzes the ATP- as well as the pyrophosphate-dependent phosphorylation of a specific serine residue in HPr, a phosphocarrier protein of the phosphoenolpyruvate-dependent sugar phosphotransferase system (PTS). HprK/P also catalyzes the pyrophosphate-producing, inorganic phosphate-dependent dephosphorylation (phosphorolysis) of seryl-phosphorylated HPr (P-Ser-HPr). The two antagonistic activities of HprK/P are regulated by several intracellular metabolites, which change their concentration in response to the absence or presence of rapidly metabolisable carbon sources (glucose, fructose, etc.) in the growth medium. Therefore, by controlling the phosphorylation state of HPr, HPrK/P is a sensor enzyme that plays a major role in the regulation of carbon metabolism and sugar transport: it mediates carbon catabolite repression (CCR), and regulates PTS-catalyzed carbohydrate uptake and inducer exclusion. This chain is HPr kinase/phosphorylase, found in Streptococcus pneumoniae (strain 70585).